Consider the following 344-residue polypeptide: Heat-inducible transcription repressor HrcA (344 aa).

The protein belongs to the HrcA family.

Its function is as follows. Negative regulator of class I heat shock genes (grpE-dnaK-dnaJ and groELS operons). Prevents heat-shock induction of these operons. The sequence is that of Heat-inducible transcription repressor HrcA from Streptococcus sanguinis (strain SK36).